Here is a 483-residue protein sequence, read N- to C-terminus: 6-phosphogluconate dehydrogenase, decarboxylating (483 aa).

Residues 10 to 15 (GLAVMG) and 33 to 35 (NRT) contribute to the NADP(+) site. Lysine 38 bears the N6-acetyllysine mark. Serine 57 is subject to Phosphoserine. Lysine 59 is modified (N6-acetyllysine). NADP(+)-binding positions include 75 to 77 (VKA) and asparagine 103. Residues asparagine 103 and 129-131 (SGG) each bind substrate. Serine 129 is subject to Phosphoserine. Lysine 184 functions as the Proton acceptor in the catalytic mechanism. Position 187–188 (187–188 (HN)) interacts with substrate. Glutamate 191 serves as the catalytic Proton donor. Substrate-binding residues include tyrosine 192, lysine 261, and arginine 288. Lysine 309 is modified (N6-acetyllysine). 2 residues coordinate substrate: arginine 447 and histidine 453. 478–481 (SSSY) is a binding site for NADP(+).

The protein belongs to the 6-phosphogluconate dehydrogenase family. As to quaternary structure, homodimer.

Its subcellular location is the cytoplasm. The catalysed reaction is 6-phospho-D-gluconate + NADP(+) = D-ribulose 5-phosphate + CO2 + NADPH. The protein operates within carbohydrate degradation; pentose phosphate pathway; D-ribulose 5-phosphate from D-glucose 6-phosphate (oxidative stage): step 3/3. In terms of biological role, catalyzes the oxidative decarboxylation of 6-phosphogluconate to ribulose 5-phosphate and CO(2), with concomitant reduction of NADP to NADPH. This Homo sapiens (Human) protein is 6-phosphogluconate dehydrogenase, decarboxylating (PGD).